A 245-amino-acid chain; its full sequence is 2,3-bisphosphoglycerate-dependent phosphoglycerate mutase (245 aa).

Substrate is bound by residues 8-15, 21-22, Arg60, 87-90, Lys98, 114-115, and 183-184; these read RHGQSLWN, TG, ERHY, RR, and GN. The active-site Tele-phosphohistidine intermediate is His9. Glu87 acts as the Proton donor/acceptor in catalysis.

This sequence belongs to the phosphoglycerate mutase family. BPG-dependent PGAM subfamily.

It catalyses the reaction (2R)-2-phosphoglycerate = (2R)-3-phosphoglycerate. It functions in the pathway carbohydrate degradation; glycolysis; pyruvate from D-glyceraldehyde 3-phosphate: step 3/5. Catalyzes the interconversion of 2-phosphoglycerate and 3-phosphoglycerate. This chain is 2,3-bisphosphoglycerate-dependent phosphoglycerate mutase, found in Bacillus cereus (strain ZK / E33L).